We begin with the raw amino-acid sequence, 304 residues long: m7GpppX diphosphatase (304 aa).

Residues glutamate 152, lysine 174, and 235–246 (HYLPSYYHLHVH) contribute to the substrate site. Positions 242-246 (HLHVH) match the Histidine triad motif motif. Histidine 244 (nucleophile) is an active-site residue.

It belongs to the HIT family.

The protein localises to the cytoplasm. The protein resides in the nucleus. The enzyme catalyses a 5'-end (N(7)-methyl 5'-triphosphoguanosine)-ribonucleoside in mRNA + H2O = N(7)-methyl-GMP + a 5'-end diphospho-ribonucleoside in mRNA + 2 H(+). In terms of biological role, decapping scavenger enzyme that catalyzes the cleavage of a residual cap structure following the degradation of mRNAs by the 3'-&gt;5' exosome-mediated mRNA decay pathway. Hydrolyzes cap analog structures like 7-methylguanosine nucleoside triphosphate (m7GpppG) with up to 10 nucleotide substrates (small capped oligoribonucleotides) and specifically releases 5'-phosphorylated RNA fragments and 7-methylguanosine monophosphate (m7GMP). Has no activity towards mRNA molecules longer than 25 nucleotides. May also play a role in the 5'-&gt;3 mRNA decay pathway; m7GDP, the downstream product released by the 5'-&gt;3' mRNA mediated decapping activity, may be also converted by DCS1 to m7GMP. Inhibits mRNA translation. Binds to the m7GpppG cap analog. This is m7GpppX diphosphatase (nhm1) from Schizosaccharomyces pombe (strain 972 / ATCC 24843) (Fission yeast).